The sequence spans 356 residues: Arginine kinase (356 aa).

One can recognise a Phosphagen kinase N-terminal domain in the interval 8–91 (EKLEAGFKKL…FDPIIEDYHG (84 aa)). 64 to 68 (GVGIY) is a substrate binding site. One can recognise a Phosphagen kinase C-terminal domain in the interval 119–356 (YVISTRVRCG…LELIKIEGSL (238 aa)). Residues 122–126 (STRVR) and His185 each bind ATP. Glu225 provides a ligand contact to substrate. Arg229 serves as a coordination point for ATP. Cys271 contributes to the substrate binding site. Residues 280-284 (RASVH) and 309-314 (RGSTGE) contribute to the ATP site. Residue Glu314 coordinates substrate.

Belongs to the ATP:guanido phosphotransferase family.

It catalyses the reaction L-arginine + ATP = N(omega)-phospho-L-arginine + ADP + H(+). The polypeptide is Arginine kinase (ARGK) (Schistocerca americana (American grasshopper)).